We begin with the raw amino-acid sequence, 355 residues long: MEGGSSGNTSTSCLMMMGYGDHENNNNNNGNGNGNGNGNVTICAPPMMMMMPPPPPSLTNNNNAETSNNNILFLPFMDNNNNNNPQEDNNSSSSSIKSKIMAHPHYHRLLTAYLNCQKIGAPPEVVARLEEICATSATMGRSSSSSGGGIIGEDPALDQFMEAYCEMLTKYEQELSKPFKEAMVFLSRIECQFKALTLAPNSSHESALGEAMDRNGSSDEEVDVNNSFIDPQAEDRELKGQLLRKYSGYLGSLKQEFMKKRKKGKLPKEARQQLVDWWLRHIKWPYPSESQKLALAESTGLDQKQINNWFINQRKRHWKPSEDMQFVVMDAAHPHYYMDNVLANHFPMDMTPSLL.

The disordered stretch occupies residues 75 to 96 (PFMDNNNNNNPQEDNNSSSSSI). The span at 79–96 (NNNNNNPQEDNNSSSSSI) shows a compositional bias: low complexity. Residues 237–257 (ELKGQLLRKYSGYLGSLKQEF) form the ELK domain. The segment at residues 258–321 (MKKRKKGKLP…NQRKRHWKPS (64 aa)) is a DNA-binding region (homeobox; TALE-type).

This sequence belongs to the TALE/KNOX homeobox family. As to expression, expressed in developing lateral organs and developing ovaries in flowers.

Its subcellular location is the nucleus. May have a role to play in formative events in ovule and embryo morphogenesis. Probably binds to the DNA sequence 5'-TGAC-3'. In Solanum lycopersicum (Tomato), this protein is Homeobox protein knotted-1-like LET6 (LET6).